Consider the following 283-residue polypeptide: Aldo-keto reductase MSMEG_2407/MSMEI_2346 (283 aa).

The Proton donor role is filled by Tyr58. Residues Gly196, Leu198, Val200, Ile236, Arg238, Ser239, Ala240, Arg244, Ser247, Asn248, and Arg274 each contribute to the NADPH site.

It belongs to the aldo/keto reductase family. In terms of assembly, monomer.

Its activity is regulated as follows. Inhibited by the antituberculosis drug isoniazid (INH). In terms of biological role, catalyzes the NADPH-dependent reduction of dicarbonyls. Exhibits narrow substrate specificity, with preferential activity against the dicarbonyl substrates phenylglyoxal and methylglyoxal. Exhibits weak activity with ethyl-2-methyl acetoacetate. Cannot use NADH. May play an important role in the detoxification of methylglyoxal. This chain is Aldo-keto reductase MSMEG_2407/MSMEI_2346, found in Mycolicibacterium smegmatis (strain ATCC 700084 / mc(2)155) (Mycobacterium smegmatis).